We begin with the raw amino-acid sequence, 132 residues long: Protein NrdI (132 aa).

Belongs to the NrdI family.

Probably involved in ribonucleotide reductase function. The chain is Protein NrdI from Staphylococcus haemolyticus (strain JCSC1435).